Consider the following 68-residue polypeptide: Lividin-1 (68 aa).

A signal peptide spans 1–22 (MFTLKKSLLLLFFLGTINLSLC). A propeptide spanning residues 23–42 (QEERNADEEERRDERNVEVE) is cleaved from the precursor. A disulfide bridge links cysteine 62 with cysteine 68.

In terms of tissue distribution, expressed by the skin glands.

Its subcellular location is the secreted. Functionally, antimicrobial peptide. This Odorrana livida (Green mountain frog) protein is Lividin-1.